The following is a 342-amino-acid chain: MKFLDLCKVYIRSGGGGGGCVSFRREKFIEFGGPDGGDGGNGGSVWAEAVDGLNTLIDFRYQQHFFAKSGQPGMGSQRTGRSGDDIVLKVPVGTEIIDEDEETVIADLTEVGQRVLLAQGGNGGWGNLRFKSSTNRAPARANPGQPGIDRTIWLRLKLIADAGLLGLPNAGKSTFLSATSNARPKIADYPFTTLVPNLGVVGVDGKEFVIADIPGLIEGASEGRGLGDQFLAHVERCSVLLHLVDGTSSTIVKDYRTIIGELEAYGGDLALKPRITAMNKIDAMDSRQISDRRRALEKATGGKVFTISGVAGTGLMDVLRALWAEIDGARGDKVEEHAPWQP.

The Obg domain maps to 1–159 (MKFLDLCKVY…RTIWLRLKLI (159 aa)). Residues 160 to 327 (ADAGLLGLPN…VLRALWAEID (168 aa)) enclose the OBG-type G domain. GTP-binding positions include 166-173 (GLPNAGKS), 191-195 (FTTLV), 212-215 (DIPG), 279-282 (NKID), and 308-310 (SGV). S173 and T193 together coordinate Mg(2+).

The protein belongs to the TRAFAC class OBG-HflX-like GTPase superfamily. OBG GTPase family. Monomer. Mg(2+) is required as a cofactor.

The protein localises to the cytoplasm. Functionally, an essential GTPase which binds GTP, GDP and possibly (p)ppGpp with moderate affinity, with high nucleotide exchange rates and a fairly low GTP hydrolysis rate. Plays a role in control of the cell cycle, stress response, ribosome biogenesis and in those bacteria that undergo differentiation, in morphogenesis control. The protein is GTPase Obg of Cereibacter sphaeroides (strain ATCC 17029 / ATH 2.4.9) (Rhodobacter sphaeroides).